The following is an 86-amino-acid chain: Muscarinic toxin-like protein (86 aa).

A signal peptide spans 1 to 21 (MKTLLLTLAVVTMVCMDLGYT). 4 cysteine pairs are disulfide-bonded: C24/C45, C38/C62, C66/C78, and C79/C84.

Belongs to the three-finger toxin family. Short-chain subfamily. Orphan group VIII (haditoxin) sub-subfamily. As to quaternary structure, homodimer; non-covalently linked. In terms of tissue distribution, expressed by the venom gland.

It localises to the secreted. Its function is as follows. Antagonist of muscle and neuronal nicotinic acetylcholine receptors (nAChR) with highest affinity for neuronal alpha-7/CHRNA7 nAChRs. This Bungarus multicinctus (Many-banded krait) protein is Muscarinic toxin-like protein.